Here is a 162-residue protein sequence, read N- to C-terminus: NADH-quinone oxidoreductase subunit I (162 aa).

4Fe-4S ferredoxin-type domains are found at residues 53 to 83 (LRRY…IESE) and 93 to 122 (TRYD…ETRV). [4Fe-4S] cluster contacts are provided by cysteine 63, cysteine 66, cysteine 69, cysteine 73, cysteine 102, cysteine 105, cysteine 108, and cysteine 112.

Belongs to the complex I 23 kDa subunit family. In terms of assembly, NDH-1 is composed of 14 different subunits. Subunits NuoA, H, J, K, L, M, N constitute the membrane sector of the complex. It depends on [4Fe-4S] cluster as a cofactor.

The protein localises to the cell inner membrane. It carries out the reaction a quinone + NADH + 5 H(+)(in) = a quinol + NAD(+) + 4 H(+)(out). Functionally, NDH-1 shuttles electrons from NADH, via FMN and iron-sulfur (Fe-S) centers, to quinones in the respiratory chain. The immediate electron acceptor for the enzyme in this species is believed to be ubiquinone. Couples the redox reaction to proton translocation (for every two electrons transferred, four hydrogen ions are translocated across the cytoplasmic membrane), and thus conserves the redox energy in a proton gradient. The protein is NADH-quinone oxidoreductase subunit I of Nitrosomonas eutropha (strain DSM 101675 / C91 / Nm57).